Consider the following 207-residue polypeptide: MSHGPLRVGIGGPVGAGKTTLTEKLCAALAHRCSMAVITNDIYTREDAEALMRAQVLPAERIRGVETGGCPHTAIREDASINLAAVADLRRTFPDLDLILIESGGDNLAATFSPELADLTIYVIDTAAGQDIPRKRGPGLARSDLLVVNKTDLAPHVGVDLARLEADTQAARGQRPYVMARMRAGVGVEAIVAFLEREGGLQLLPQD.

12 to 19 serves as a coordination point for GTP; that stretch reads GPVGAGKT.

The protein belongs to the SIMIBI class G3E GTPase family. UreG subfamily. Homodimer. UreD, UreF and UreG form a complex that acts as a GTP-hydrolysis-dependent molecular chaperone, activating the urease apoprotein by helping to assemble the nickel containing metallocenter of UreC. The UreE protein probably delivers the nickel.

Its subcellular location is the cytoplasm. Functionally, facilitates the functional incorporation of the urease nickel metallocenter. This process requires GTP hydrolysis, probably effectuated by UreG. This is Urease accessory protein UreG from Cereibacter sphaeroides (strain ATCC 17029 / ATH 2.4.9) (Rhodobacter sphaeroides).